The primary structure comprises 788 residues: Response regulator SSK1 (788 aa).

A Response regulatory domain is found at 534 to 691 (NVLIVEDNII…WLERKVKEWG (158 aa)). At Asp-583 the chain carries 4-aspartylphosphate.

Belongs to the SSK1 family.

The protein localises to the cytoplasm. Its function is as follows. Two-domain response regulator protein in the two-component signal transduction system of the HOG1 pathway. Controls high-osmolarity adaptation and fungicide sensitivity via its regulation of the phosphorylation of HOG1. The polypeptide is Response regulator SSK1 (Cochliobolus heterostrophus (strain C5 / ATCC 48332 / race O) (Southern corn leaf blight fungus)).